Here is a 1048-residue protein sequence, read N- to C-terminus: 3-hydroxy-3-methylglutaryl-coenzyme A reductase (1048 aa).

The Cytoplasmic portion of the chain corresponds to 1–32 (MDPVVKKPSPGGVQHRVTKGLRAIVGHACRHP). A helical transmembrane segment spans residues 33–53 (IHTLLVTALTAATTHLHVLEG). At 54–220 (TYQAAHRGLA…FLHRVKHAET (167 aa)) the chain is on the lumenal side. The chain crosses the membrane as a helical span at residues 221–241 (VDLVIIGLSYLAMNMTVVSLF). The SSD domain occupies 222–403 (DLVIIGLSYL…FTFYATILCV (182 aa)). The Cytoplasmic portion of the chain corresponds to 242–250 (RVMRQLGSR). Residues 251 to 271 (FWLATSVLLSGAFAFVLGLGI) traverse the membrane as a helical segment. Residues 272 to 276 (TTTCD) lie on the Lumenal side of the membrane. The chain crosses the membrane as a helical span at residues 277–297 (VPVDMLLLFEGIPYLVLTVGF). The Cytoplasmic segment spans residues 298–348 (EKPIQLTRAVLCVSEELRGGWQRPVPNGASSDDSRQSQLIPNIIQLAVDRE). A helical membrane pass occupies residues 349–369 (GWYIVRSYLLEIGALALGAVL). At 370 to 377 (RPNDSLGH) the chain is on the lumenal side. Asn372 carries N-linked (GlcNAc...) asparagine glycosylation. A helical transmembrane segment spans residues 378-398 (FCFLAAWTLLIDAILLFTFYA). Residues 399–439 (TILCVKLEITRIRSPGGLGQVNAKHPSGIFGHKVKSTNITW) are Cytoplasmic-facing. The chain crosses the membrane as a helical span at residues 440 to 460 (WKLLTVGGFVLCHFLQLSPFF). Over 461 to 542 (YRVMGEYMAN…LDGLESPLGR (82 aa)) the chain is Lumenal. N-linked (GlcNAc...) asparagine glycans are attached at residues Asn470 and Asn520. Residues 543–563 (LCLMGALVVSLVLNNHLIHAA) traverse the membrane as a helical segment. Residues 564-1048 (RWHAWPQARE…NRSAGATVKK (485 aa)) are Cytoplasmic-facing. Glu729 (charge relay system) is an active-site residue. Residue 735-741 (SASRGCK) coordinates CoA. Residues 796 to 798 (SRF) and 823 to 831 (DAMGMNMIS) each bind NADP(+). The Charge relay system role is filled by Lys863. 892-894 (VLK) is a binding site for CoA. The active-site Charge relay system is the Asp939. Residue 1034 to 1035 (AH) coordinates CoA. The active-site Proton donor is the His1035. Residue 1039 to 1040 (NR) participates in NADP(+) binding.

This sequence belongs to the HMG-CoA reductase family.

It is found in the endoplasmic reticulum membrane. The enzyme catalyses (R)-mevalonate + 2 NADP(+) + CoA = (3S)-3-hydroxy-3-methylglutaryl-CoA + 2 NADPH + 2 H(+). It participates in metabolic intermediate biosynthesis; (R)-mevalonate biosynthesis; (R)-mevalonate from acetyl-CoA: step 3/3. HMG-CoA reductase; part of the first module of ergosterol biosynthesis pathway that includes the early steps of the pathway, conserved across all eukaryotes, and which results in the formation of mevalonate from acetyl-coenzyme A (acetyl-CoA). In this module, the cytosolic acetyl-CoA acetyltransferase catalyzes the formation of acetoacetyl-CoA. The hydroxymethylglutaryl-CoA synthase then condenses acetyl-CoA with acetoacetyl-CoA to form HMG-CoA. The rate-limiting step of the early module is the reduction to mevalonate by the 3-hydroxy-3-methylglutaryl-coenzyme A (HMG-CoA) reductase. The chain is 3-hydroxy-3-methylglutaryl-coenzyme A reductase from Aspergillus terreus (strain NIH 2624 / FGSC A1156).